A 325-amino-acid polypeptide reads, in one-letter code: Adenine deaminase (325 aa).

Zn(2+) is bound by residues H8, H10, and H186. The Proton donor role is filled by E189. D267 contributes to the Zn(2+) binding site. D268 is a substrate binding site.

The protein belongs to the metallo-dependent hydrolases superfamily. Adenosine and AMP deaminases family. Adenine deaminase type 2 subfamily. Zn(2+) serves as cofactor.

It catalyses the reaction adenine + H2O + H(+) = hypoxanthine + NH4(+). Functionally, catalyzes the hydrolytic deamination of adenine to hypoxanthine. Plays an important role in the purine salvage pathway and in nitrogen catabolism. In Chelativorans sp. (strain BNC1), this protein is Adenine deaminase.